The following is a 138-amino-acid chain: uncharacterized protein (138 aa).

3 consecutive transmembrane segments (helical) span residues 12–32 (LHFLGFIGGIFAILGVIVLPI), 62–82 (LIAVPLFVLGYFISTIDFSVL), and 111–131 (FHWVASLPAWFITTVCALICS).

The protein resides in the cell membrane. This is an uncharacterized protein from Haemophilus influenzae (strain ATCC 51907 / DSM 11121 / KW20 / Rd).